Reading from the N-terminus, the 233-residue chain is Orotidine 5'-phosphate decarboxylase (233 aa).

Substrate is bound by residues aspartate 13, lysine 35, 62–71 (DLKFHDIPNT), threonine 122, arginine 182, glutamine 191, glycine 211, and arginine 212. Lysine 64 functions as the Proton donor in the catalytic mechanism.

This sequence belongs to the OMP decarboxylase family. Type 1 subfamily. Homodimer.

The catalysed reaction is orotidine 5'-phosphate + H(+) = UMP + CO2. The protein operates within pyrimidine metabolism; UMP biosynthesis via de novo pathway; UMP from orotate: step 2/2. In terms of biological role, catalyzes the decarboxylation of orotidine 5'-monophosphate (OMP) to uridine 5'-monophosphate (UMP). This is Orotidine 5'-phosphate decarboxylase from Pseudomonas putida (strain ATCC 700007 / DSM 6899 / JCM 31910 / BCRC 17059 / LMG 24140 / F1).